The sequence spans 553 residues: Phenylalanine--tRNA ligase beta subunit (553 aa).

The region spanning 273–349 is the B5 domain; it reads FNVRNIDIEV…RAFGYNNITP (77 aa). Positions 327, 333, 336, and 337 each coordinate Mg(2+).

The protein belongs to the phenylalanyl-tRNA synthetase beta subunit family. Type 2 subfamily. Tetramer of two alpha and two beta subunits. The cofactor is Mg(2+).

The protein resides in the cytoplasm. The enzyme catalyses tRNA(Phe) + L-phenylalanine + ATP = L-phenylalanyl-tRNA(Phe) + AMP + diphosphate + H(+). In Methanocella arvoryzae (strain DSM 22066 / NBRC 105507 / MRE50), this protein is Phenylalanine--tRNA ligase beta subunit.